We begin with the raw amino-acid sequence, 389 residues long: Large envelope protein (389 aa).

N-acetylmethionine is present on Met-1. A lipid anchor (N-myristoyl glycine; by host) is attached at Gly-2. The interval 2 to 108 (GQNLSTSNPL…PPLRNTHPQA (107 aa)) is pre-S1. The tract at residues 2–163 (GQNLSTSNPL…FSRIGDPALN (162 aa)) is pre-S. Residues 2–170 (GQNLSTSNPL…ALNMENITSG (169 aa)) lie on the Virion surface; in external conformation side of the membrane. The Intravirion; in internal conformation portion of the chain corresponds to 2–242 (GQNLSTSNPL…PGYRWMCLRR (241 aa)). Positions 76 to 103 (TLPANPPPASTNRQSGRQPTPLSPPLRN) are disordered. Over residues 85 to 95 (STNRQSGRQPT) the composition is skewed to polar residues. Residues 109 to 163 (MQWNSTTFHQTLQDPRVRGLYLPAGGSSSGTVNPVPTTVSPISSIFSRIGDPALN) are pre-S2. Residues 171–191 (FLGPLLVLQAGFFLLTKILTI) traverse the membrane as a helical segment. Topologically, residues 192–242 (PKSLDSWWTSLNFLGGTTVCLGQNSQSPTSNHSPTSCPPTCPGYRWMCLRR) are intravirion; in external conformation. The helical transmembrane segment at 243-263 (FIIFLFILLLCLIFLLVLLDY) threads the bilayer. Topologically, residues 264–337 (QGMLPVCPLI…WASARFSWLS (74 aa)) are virion surface. A glycan (N-linked (GlcNAc...) asparagine; by host) is linked at Asn-309. Residues 338–358 (LLVPFVQWFVGLSPTVWLLVI) form a helical membrane-spanning segment. At 359–364 (WMMWYW) the chain is on the intravirion side. The chain crosses the membrane as a helical span at residues 365-387 (GPKLFTILSPFLPLLPIFFCLWV). Residues 388–389 (YI) are Virion surface-facing.

This sequence belongs to the orthohepadnavirus major surface antigen family. As to quaternary structure, in its internal form (Li-HBsAg), interacts with the capsid protein and with the isoform S. Interacts with host chaperone CANX. Associates with host chaperone CANX through its pre-S2 N glycan; this association may be essential for isoform M proper secretion. In terms of assembly, interacts with isoform L. Interacts with the antigens of satellite virus HDV (HDVAgs); this interaction is required for encapsidation of HDV genomic RNA. In terms of processing, isoform M is N-terminally acetylated by host at a ratio of 90%, and N-glycosylated by host at the pre-S2 region. Post-translationally, myristoylated.

The protein localises to the virion membrane. The large envelope protein exists in two topological conformations, one which is termed 'external' or Le-HBsAg and the other 'internal' or Li-HBsAg. In its external conformation the protein attaches the virus to cell receptors and thereby initiating infection. This interaction determines the species specificity and liver tropism. This attachment induces virion internalization predominantly through caveolin-mediated endocytosis. The large envelope protein also assures fusion between virion membrane and endosomal membrane. In its internal conformation the protein plays a role in virion morphogenesis and mediates the contact with the nucleocapsid like a matrix protein. In terms of biological role, the middle envelope protein plays an important role in the budding of the virion. It is involved in the induction of budding in a nucleocapsid independent way. In this process the majority of envelope proteins bud to form subviral lipoprotein particles of 22 nm of diameter that do not contain a nucleocapsid. This is Large envelope protein from Homo sapiens (Human).